The sequence spans 393 residues: MAEAMDLGKDPNGPTHSSTLFVREDGSAMSFYVRPSSAKRRLSTLILHGGGTVCRVQEPGAVLLAQPGEALAEASGDFISTQYILDCVDRNEKLDLEAYRLGLTEQASDPKPGASTEGSTEPEPQPLTGRIAYTDAEDVAILTYVKENARSPSSVTGNALWKAMEKSSLTQHSWQSLKDRYLKHLRGQEHKYLLGNAPVSPSSQKLKRKAEQDPEAADSGEPQNKRAPDLPEEECVKGEIKENGEADNKLFEEAAPEFGEAVVDESPDFEIHITMCDGDPPTPEEDSETQPDEEEEEPKVSTQEVGTAIKVIRQLMEKFNLDLSTVTQALLKNSGELEATSSFLESGRRPDGYPIWCRQDDLDLQKDDDDTKNALVKKFGAQNVARRIEFRKK.

An N-acetylalanine modification is found at Ala-2. A phosphoserine mark is found at Ser-36 and Ser-43. A BRCT domain is found at 78 to 101 (FISTQYILDCVDRNEKLDLEAYRL). Positions 104–132 (TEQASDPKPGASTEGSTEPEPQPLTGRIA) are disordered. Lys-111 participates in a covalent cross-link: Glycyl lysine isopeptide (Lys-Gly) (interchain with G-Cter in SUMO2). Positions 125-185 (QPLTGRIAYT…SLKDRYLKHL (61 aa)) constitute a Myb-like domain. Ser-151 and Ser-153 each carry phosphoserine. Residue Lys-191 forms a Glycyl lysine isopeptide (Lys-Gly) (interchain with G-Cter in SUMO2) linkage. The tract at residues 193 to 304 (LLGNAPVSPS…EEEPKVSTQE (112 aa)) is disordered. Ser-200 and Ser-203 each carry phosphoserine. Residues Lys-205, Lys-209, and Lys-237 each participate in a glycyl lysine isopeptide (Lys-Gly) (interchain with G-Cter in SUMO2) cross-link. The segment covering 223-252 (QNKRAPDLPEEECVKGEIKENGEADNKLFE) has biased composition (basic and acidic residues). Residues 282–297 (TPEEDSETQPDEEEEE) are compositionally biased toward acidic residues. Lys-366 participates in a covalent cross-link: Glycyl lysine isopeptide (Lys-Gly) (interchain with G-Cter in SUMO2). The Nuclear localization signal motif lies at 377–393 (KKFGAQNVARRIEFRKK).

It belongs to the RAP1 family. In terms of assembly, homodimer. Component of the shelterin complex (telosome) composed of TERF1, TERF2, TINF2, TERF2IP ACD and POT1. Binds to TERF2 (but not TERF1) with its C-terminus. Interacts with SLX4/BTBD12. Interacts with TERF2; the interaction is direct. Does not interact with TERF1. Associates with the I-kappa-B-kinase (IKK) core complex, composed of CHUK, IKBKB and IKBKG.

It localises to the nucleus. Its subcellular location is the cytoplasm. It is found in the chromosome. The protein localises to the telomere. Functionally, acts both as a regulator of telomere function and as a transcription regulator. Involved in the regulation of telomere length and protection as a component of the shelterin complex (telosome). In contrast to other components of the shelterin complex, it is dispensible for telomere capping and does not participate in the protection of telomeres against non-homologous end-joining (NHEJ)-mediated repair. Instead, it is required to negatively regulate telomere recombination and is essential for repressing homology-directed repair (HDR), which can affect telomere length. Does not bind DNA directly: recruited to telomeric double-stranded 5'-TTAGGG-3' repeats via its interaction with TERF2. Independently of its function in telomeres, also acts as a transcription regulator: recruited to extratelomeric 5'-TTAGGG-3' sites via its association with TERF2 or other factors, and regulates gene expression. When cytoplasmic, associates with the I-kappa-B-kinase (IKK) complex and acts as a regulator of the NF-kappa-B signaling by promoting IKK-mediated phosphorylation of RELA/p65, leading to activate expression of NF-kappa-B target genes. In Mus musculus (Mouse), this protein is Telomeric repeat-binding factor 2-interacting protein 1 (Terf2ip).